The primary structure comprises 307 residues: Salivary glue protein Sgs-3 (307 aa).

An N-terminal signal peptide occupies residues 1–23 (MKLTIATALASILLIGSANVANC). The interval 56–257 (APPTQQSTTQ…PTTTKPTTPK (202 aa)) is disordered.

In terms of processing, O-glycosylated by Pgnat9 in salivary glands. Specifically expressed in the salivary gland.

The protein localises to the secreted. This Drosophila melanogaster (Fruit fly) protein is Salivary glue protein Sgs-3.